Here is a 269-residue protein sequence, read N- to C-terminus: Tryptophan synthase alpha chain (269 aa).

Catalysis depends on proton acceptor residues Glu49 and Asp60.

Belongs to the TrpA family. Tetramer of two alpha and two beta chains.

The catalysed reaction is (1S,2R)-1-C-(indol-3-yl)glycerol 3-phosphate + L-serine = D-glyceraldehyde 3-phosphate + L-tryptophan + H2O. The protein operates within amino-acid biosynthesis; L-tryptophan biosynthesis; L-tryptophan from chorismate: step 5/5. Its function is as follows. The alpha subunit is responsible for the aldol cleavage of indoleglycerol phosphate to indole and glyceraldehyde 3-phosphate. This chain is Tryptophan synthase alpha chain, found in Acidovorax sp. (strain JS42).